Reading from the N-terminus, the 61-residue chain is Large ribosomal subunit protein eL37 (61 aa).

The Zn(2+) site is built by cysteine 19, cysteine 22, cysteine 34, and cysteine 37. The C4-type zinc finger occupies 19-37 (CRRCGRNSFNVRKGYCAAC).

Belongs to the eukaryotic ribosomal protein eL37 family. Zn(2+) serves as cofactor.

Its function is as follows. Binds to the 23S rRNA. This Sulfurisphaera tokodaii (strain DSM 16993 / JCM 10545 / NBRC 100140 / 7) (Sulfolobus tokodaii) protein is Large ribosomal subunit protein eL37 (rpl37e).